Reading from the N-terminus, the 454-residue chain is Elongation factor Tu, mitochondrial (454 aa).

The transit peptide at 1–51 (MASVVLRNPSSKRLVPFSSQIYSRCGASVTSSYSISHSIGGDDLSSSTFGT) directs the protein to the mitochondrion. The region spanning 65–261 (KPHVNVGTIG…AVDEYIPDPV (197 aa)) is the tr-type G domain. Positions 74-81 (GHVDHGKT) are G1. GTP is bound at residue 74 to 81 (GHVDHGKT). Position 82 is a phosphothreonine (Thr82). Residues 115–119 (GITIA) form a G2 region. A G3 region spans residues 136–139 (DCPG). GTP-binding positions include 136 to 140 (DCPGH) and 191 to 194 (NKVD). The G4 stretch occupies residues 191 to 194 (NKVD). Residues 229-231 (SAL) form a G5 region.

This sequence belongs to the TRAFAC class translation factor GTPase superfamily. Classic translation factor GTPase family. EF-Tu/EF-1A subfamily.

Its subcellular location is the mitochondrion. Its function is as follows. This protein promotes the GTP-dependent binding of aminoacyl-tRNA to the A-site of ribosomes during protein biosynthesis. The chain is Elongation factor Tu, mitochondrial (TUFA) from Arabidopsis thaliana (Mouse-ear cress).